The sequence spans 282 residues: Shikimate dehydrogenase (NADP(+)) (282 aa).

Shikimate contacts are provided by residues 19–21 (TQS) and threonine 66. The Proton acceptor role is filled by lysine 70. Shikimate is bound by residues asparagine 91 and aspartate 107. NADP(+)-binding positions include 132-136 (GAGGA), 155-160 (NRTITR), isoleucine 224, and glycine 246.

It belongs to the shikimate dehydrogenase family. In terms of assembly, homodimer.

It carries out the reaction shikimate + NADP(+) = 3-dehydroshikimate + NADPH + H(+). It functions in the pathway metabolic intermediate biosynthesis; chorismate biosynthesis; chorismate from D-erythrose 4-phosphate and phosphoenolpyruvate: step 4/7. Functionally, involved in the biosynthesis of the chorismate, which leads to the biosynthesis of aromatic amino acids. Catalyzes the reversible NADPH linked reduction of 3-dehydroshikimate (DHSA) to yield shikimate (SA). The protein is Shikimate dehydrogenase (NADP(+)) of Buchnera aphidicola subsp. Baizongia pistaciae (strain Bp).